Consider the following 132-residue polypeptide: MSMSDPLGDMLTRIRNALGRKKDKVVTPASKLRAHVLDVLQSEGYIRGYNQVDLGDGKAELEIELKYFEGMAAIRDISRVSKPGRRVYVSAKSLPQVANGLGISVLSTPKGVMADHEAREQNVGGELLCRVF.

It belongs to the universal ribosomal protein uS8 family. As to quaternary structure, part of the 30S ribosomal subunit. Contacts proteins S5 and S12.

Functionally, one of the primary rRNA binding proteins, it binds directly to 16S rRNA central domain where it helps coordinate assembly of the platform of the 30S subunit. In Bartonella tribocorum (strain CIP 105476 / IBS 506), this protein is Small ribosomal subunit protein uS8.